Here is a 473-residue protein sequence, read N- to C-terminus: ATP-dependent 6-phosphofructokinase 1 (473 aa).

Ser-71 carries the post-translational modification Phosphoserine. ATP contacts are provided by residues Gly-102, Arg-165–Gly-166, and Gly-190–Ser-193. Asp-191 contacts Mg(2+). Substrate is bound by residues Thr-219–Asp-221, Met-264–Arg-266, Glu-320, and Tyr-376–Arg-379. The active-site Proton acceptor is the Asp-221.

It belongs to the phosphofructokinase type A (PFKA) family. PPi-dependent PFK group II subfamily. Atypical ATP-dependent clade 'X' sub-subfamily. In terms of assembly, homotetramer. Requires Mg(2+) as cofactor. Expressed in roots, leaves, stems and flowers.

The protein resides in the cytoplasm. It carries out the reaction beta-D-fructose 6-phosphate + ATP = beta-D-fructose 1,6-bisphosphate + ADP + H(+). It participates in carbohydrate degradation; glycolysis; D-glyceraldehyde 3-phosphate and glycerone phosphate from D-glucose: step 3/4. Allosterically activated by AMP. In terms of biological role, catalyzes the phosphorylation of D-fructose 6-phosphate to fructose 1,6-bisphosphate by ATP, the first committing step of glycolysis. The protein is ATP-dependent 6-phosphofructokinase 1 of Arabidopsis thaliana (Mouse-ear cress).